The primary structure comprises 915 residues: Protein translocase subunit SecA (915 aa).

Residues Q87, 105–109 (GEGKT), and D512 each bind ATP. The interval 881-915 (LPGTAPVRPEPKIGRNEPCPCGSGKKYKHCHGQLN) is disordered. 4 residues coordinate Zn(2+): C899, C901, C910, and H911. Residues 905-915 (KKYKHCHGQLN) show a composition bias toward basic residues.

The protein belongs to the SecA family. In terms of assembly, monomer and homodimer. Part of the essential Sec protein translocation apparatus which comprises SecA, SecYEG and auxiliary proteins SecDF-YajC and YidC. Zn(2+) serves as cofactor.

Its subcellular location is the cell inner membrane. It is found in the cytoplasm. It catalyses the reaction ATP + H2O + cellular proteinSide 1 = ADP + phosphate + cellular proteinSide 2.. Its function is as follows. Part of the Sec protein translocase complex. Interacts with the SecYEG preprotein conducting channel. Has a central role in coupling the hydrolysis of ATP to the transfer of proteins into and across the cell membrane, serving both as a receptor for the preprotein-SecB complex and as an ATP-driven molecular motor driving the stepwise translocation of polypeptide chains across the membrane. The sequence is that of Protein translocase subunit SecA from Azotobacter vinelandii (strain DJ / ATCC BAA-1303).